A 902-amino-acid polypeptide reads, in one-letter code: MLIKLLTKVFGSRNDRTLRRMRKVVEQINRMEPEMEQLSDELLKAKTVEFRGRLAQGAALDSLLPEAFATVREASKRVFGMRHFDVQLLGGMVLNERCIAEMRTGEGKTLTATLPAYLNALTGKGVHVVTVNDYLAQRDAENNRPLFEFLGLSVGINLPGMAAPAKRAAYAADITYGTNNEYGFDYLRDNMAFSPEERVQRKLHYALVDEVDSILIDEARTPLIISGPAEDSSELYIKVDKLIPHLKRQEKEDSDTFQGDGHYSVDEKTRQVNLTERGLVLIEELLADVGIMDEGESLYSPANIMLMHHVTAALRAHALFTRDVDYIVKEGEVIIVDEHTGRTMQGRRWSDGLHQAVEAKEGVQIQNENQTLASITFQNYFRLYEKLAGMTGTADTEAFEFSSIYKLDTIVVPTNRPMIRKDLPDLVYMTEQDKIAAIIEDIRERTAKGQPVLVGTVSIEKSEMVSHELTKAGIAHSVLNAKFHAKEADIVAQAGQPGAVTIATNMAGRGTDIMLGGSWQAEIALLESPTEAQIEAIKAEWQTCHDAVLAAGGLHIIGTERHESRRIDNQLRGRSGRQGDAGSSRFYLSLEDSLMRIFASDRVANMMRKLGMKPGEAIEHPWVTKAIANAQRKVESRNFDIRKQLLEYDDVASDQRRAIYTQRNELLDGGDVVDTINSIREDVFKVVIDSYIPPQSLEEMWDVAGLEERLRNDFDLELPITEWLDKEPELHEETLRERILTMAVEHYQSKEEVVGGEMMRSFEKGIMLQTLDSLWKEHLAAMDYLRQGIHLRGYAQKDPKQEYKRESFAMFAAMLESLKYEVISVLSKVQVRMPEEVEALERQRREDAERLARQQQLSHLDDQSAAAQEMASQTGDRKIGRNDPCPCGSGKKYKQCHGRLNA.

Residues Q87, 105–109 (GEGKT), and D512 each bind ATP. The segment at 847–902 (DAERLARQQQLSHLDDQSAAAQEMASQTGDRKIGRNDPCPCGSGKKYKQCHGRLNA) is disordered. Residues C885, C887, C896, and H897 each coordinate Zn(2+). Basic residues predominate over residues 891 to 902 (KKYKQCHGRLNA).

This sequence belongs to the SecA family. Monomer and homodimer. Part of the essential Sec protein translocation apparatus which comprises SecA, SecYEG and auxiliary proteins SecDF-YajC and YidC. Zn(2+) is required as a cofactor.

It localises to the cell inner membrane. The protein localises to the cytoplasm. The catalysed reaction is ATP + H2O + cellular proteinSide 1 = ADP + phosphate + cellular proteinSide 2.. Its function is as follows. Part of the Sec protein translocase complex. Interacts with the SecYEG preprotein conducting channel. Has a central role in coupling the hydrolysis of ATP to the transfer of proteins into and across the cell membrane, serving both as a receptor for the preprotein-SecB complex and as an ATP-driven molecular motor driving the stepwise translocation of polypeptide chains across the membrane. This Edwardsiella ictaluri (strain 93-146) protein is Protein translocase subunit SecA.